A 227-amino-acid chain; its full sequence is uncharacterized protein (227 aa).

Gly-17–Thr-24 provides a ligand contact to ATP.

This is an uncharacterized protein from Methanocaldococcus jannaschii (strain ATCC 43067 / DSM 2661 / JAL-1 / JCM 10045 / NBRC 100440) (Methanococcus jannaschii).